Consider the following 398-residue polypeptide: Carbamoyl phosphate synthase small chain (398 aa).

The CPSase stretch occupies residues Met1–Glu199. Positions 54, 251, and 253 each coordinate L-glutamine. The Glutamine amidotransferase type-1 domain occupies His203 to Glu391. Residue Cys280 is the Nucleophile of the active site. L-glutamine-binding residues include Leu281, Gln284, Asn322, Gly324, and Phe325. Residues His364 and Glu366 contribute to the active site.

It belongs to the CarA family. Composed of two chains; the small (or glutamine) chain promotes the hydrolysis of glutamine to ammonia, which is used by the large (or ammonia) chain to synthesize carbamoyl phosphate. Tetramer of heterodimers (alpha,beta)4.

The catalysed reaction is hydrogencarbonate + L-glutamine + 2 ATP + H2O = carbamoyl phosphate + L-glutamate + 2 ADP + phosphate + 2 H(+). It carries out the reaction L-glutamine + H2O = L-glutamate + NH4(+). It participates in amino-acid biosynthesis; L-arginine biosynthesis; carbamoyl phosphate from bicarbonate: step 1/1. It functions in the pathway pyrimidine metabolism; UMP biosynthesis via de novo pathway; (S)-dihydroorotate from bicarbonate: step 1/3. Functionally, small subunit of the glutamine-dependent carbamoyl phosphate synthetase (CPSase). CPSase catalyzes the formation of carbamoyl phosphate from the ammonia moiety of glutamine, carbonate, and phosphate donated by ATP, constituting the first step of 2 biosynthetic pathways, one leading to arginine and/or urea and the other to pyrimidine nucleotides. The small subunit (glutamine amidotransferase) binds and cleaves glutamine to supply the large subunit with the substrate ammonia. This Mesorhizobium japonicum (strain LMG 29417 / CECT 9101 / MAFF 303099) (Mesorhizobium loti (strain MAFF 303099)) protein is Carbamoyl phosphate synthase small chain.